The following is a 473-amino-acid chain: NAD-dependent protein deacetylase SRT1 (473 aa).

A Deacetylase sirtuin-type domain is found at 27-267 (SHLLQCKIEE…AGVMESLNMK (241 aa)). Residues 52 to 71 (GAGI…KGIW) and 114 to 117 (QNVD) each bind NAD(+). Histidine 134 functions as the Proton acceptor in the catalytic mechanism. Zn(2+)-binding residues include cysteine 142, cysteine 145, cysteine 167, and cysteine 172. Residues 209 to 211 (GTS), 235 to 237 (NLQ), and valine 253 contribute to the NAD(+) site. Positions 447 to 473 (LEGSGTSRKRSRTGKRKSKALAEETKA) are disordered. Basic residues predominate over residues 453-465 (SRKRSRTGKRKSK).

Belongs to the sirtuin family. Class IV subfamily. As to quaternary structure, binds to the promoter region of genes influenced by ethylene. Interacts with ENAP1; this interaction is enhanced in the presence of ethylene. It depends on Zn(2+) as a cofactor.

It is found in the nucleus. It catalyses the reaction N(6)-acetyl-L-lysyl-[protein] + NAD(+) + H2O = 2''-O-acetyl-ADP-D-ribose + nicotinamide + L-lysyl-[protein]. In terms of biological role, NAD-dependent protein deacetylase. Has deacetylase activity towards H3K9Ac. May have a function in the safeguard against genome instability and DNA damage to ensure plant cell growth. Involved in responses to ethylene leading to the transcriptional repression of some ethylene-responsive genes via the regulation of histone acetylation H3K9Ac. The chain is NAD-dependent protein deacetylase SRT1 from Arabidopsis thaliana (Mouse-ear cress).